The primary structure comprises 205 residues: LexA repressor (205 aa).

The segment at residues 28 to 48 (RAELMRAFDFRSPNAAESHLR) is a DNA-binding region (H-T-H motif). Residues serine 120 and lysine 159 each act as for autocatalytic cleavage activity in the active site.

Belongs to the peptidase S24 family. In terms of assembly, homodimer.

The catalysed reaction is Hydrolysis of Ala-|-Gly bond in repressor LexA.. In terms of biological role, represses a number of genes involved in the response to DNA damage (SOS response), including recA and lexA. In the presence of single-stranded DNA, RecA interacts with LexA causing an autocatalytic cleavage which disrupts the DNA-binding part of LexA, leading to derepression of the SOS regulon and eventually DNA repair. The protein is LexA repressor of Acidithiobacillus ferrooxidans (strain ATCC 23270 / DSM 14882 / CIP 104768 / NCIMB 8455) (Ferrobacillus ferrooxidans (strain ATCC 23270)).